Consider the following 421-residue polypeptide: Testin (421 aa).

The PET domain maps to 92–199 (MILTNPVAAK…GDVKLPCEMD (108 aa)). The interval 133-164 (EKQPVAGSEGAQYRKKQLAKQLPAHDQDPSKC) is disordered. Residues 155-164 (PAHDQDPSKC) are compositionally biased toward basic and acidic residues. LIM zinc-binding domains are found at residues 234–297 (YSCY…CDSE), 299–359 (PRCA…NHAV), and 362–421 (QGCH…KMMS).

It belongs to the prickle / espinas / testin family. In terms of assembly, interacts via LIM domain 1 with ZYX. Interacts (via LIM domain 3) with ENAH and VASP. Interacts with ALKBH4, talin, actin, alpha-actinin, GRIP1 and PXN. Interacts (via LIM domain 2) with ACTL7A (via N-terminus). Heterodimer with ACTL7A; the heterodimer interacts with ENAH to form a heterotrimer.

The protein resides in the cytoplasm. The protein localises to the cell junction. Its subcellular location is the focal adhesion. Scaffold protein that may play a role in cell adhesion, cell spreading and in the reorganization of the actin cytoskeleton. Plays a role in the regulation of cell proliferation. May act as a tumor suppressor. This chain is Testin (TES), found in Colobus guereza (Mantled guereza).